The following is a 614-amino-acid chain: Protein B602L (614 aa).

31 consecutive repeat copies span residues 161 to 164 (CAST), 165 to 168 (NADT), 169 to 172 (SAST), 173 to 176 (NADT), 177 to 180 (SAST), 181 to 184 (NASI), 185 to 188 (NADT), 189 to 192 (NVDT), 193 to 196 (CAST), 197 to 200 (NAST), 201 to 204 (NVDT), 205 to 208 (NASI), 209 to 212 (NAST), 213 to 216 (NAST), 217 to 220 (NVDT), 221 to 224 (NAST), 225 to 228 (NASI), 229 to 232 (NADT), 233 to 236 (NVDT), 237 to 240 (CAST), 241 to 244 (NAST), 245 to 248 (NVDT), 249 to 252 (NASI), 253 to 256 (NAST), 257 to 260 (NAST), 261 to 264 (NVDT), 265 to 268 (NADI), 269 to 272 (NANT), 273 to 276 (NADI), 277 to 280 (NANI), and 281 to 284 (NANT). The 28 X 4 AA tandem repeats of [CNS]-[AV]-[DNS]-[IT] stretch occupies residues 161–284 (CASTNADTSA…DINANINANT (124 aa)).

This sequence belongs to the asfivirus B602L family.

The protein resides in the host cytoplasm. In terms of biological role, plays an essential role in the assembly of the icosahedral capsid of the virus. Allows the assembly of 3 molecules of hexon protein p72 and formation of a thermostable trimer. The polypeptide is Protein B602L (African swine fever virus (isolate Tick/Malawi/Lil 20-1/1983) (ASFV)).